A 466-amino-acid polypeptide reads, in one-letter code: Anthocyanidin 3-O-glucosyltransferase 1 (466 aa).

The active-site Proton acceptor is the His22. Positions 22 and 87 each coordinate an anthocyanidin. The Charge relay role is filled by Asp122. Thr145 contributes to the UDP-alpha-D-glucose binding site. His154 is an an anthocyanidin binding site. UDP-alpha-D-glucose-binding residues include Ala346, Gln348, His363, Trp366, Asn367, Ser368, and Glu371. Gly386 is a binding site for an anthocyanidin. The UDP-alpha-D-glucose site is built by Asp387 and Gln388.

The protein belongs to the UDP-glycosyltransferase family. In terms of tissue distribution, highest expression detected in receptacles and achenes, with very low levels detected in runners, leaves, flowers, crowns and green receptacles.

It catalyses the reaction an anthocyanidin + UDP-alpha-D-glucose + H(+) = an anthocyanidin 3-O-beta-D-glucoside + UDP. It carries out the reaction cyanidin + UDP-alpha-D-glucose = cyanidin 3-O-beta-D-glucoside + UDP + H(+). The catalysed reaction is pelargonidin + UDP-alpha-D-glucose = pelargonidin 3-O-beta-D-glucoside + UDP. The enzyme catalyses peonidin + UDP-alpha-D-glucose = peonidin 3-O-beta-D-glucoside + UDP. It catalyses the reaction delphinidin + UDP-alpha-D-glucose = delphinidin 3-O-beta-D-glucoside + UDP. It carries out the reaction a flavonol + UDP-alpha-D-glucose = a flavonol 3-O-beta-D-glucoside + UDP + H(+). Its pathway is pigment biosynthesis; anthocyanin biosynthesis. In terms of biological role, in the presence of other necessary color factors, this glycosylation reaction allows the accumulation of anthocyanin pigments. Uses UDP-Glc as a sugar donor, but not UDP-Gal or UDP-GlcUA. Anthocyanidins are the preferred substrates in vivo, but flavonols can also be glucosylated in vitro. This Fragaria ananassa (Strawberry) protein is Anthocyanidin 3-O-glucosyltransferase 1.